The primary structure comprises 195 residues: Calcineurin B homologous protein 1 (195 aa).

Gly-2 carries the N-myristoyl glycine lipid modification. Residues 2–6 carry the Necessary for association with microtubule and interaction with GAPDH motif; it reads GSRAS. EF-hand domains are found at residues 26–61, 71–106, 110–145, and 151–186; these read SQITRLYSRFTSLDKGENGTLSREDFQRIPELAINP, FSEGEDQVNFRGFMRTLAHFRPIEDNEKSKDVNGPE, SRSNKLHFAFRLYDLDKDDKISRDELLQVLRMMVGV, and QLGSIADRTIQEADQDGDSAISFTEFVKVLEKVDVE. Residues Asp-123, Asp-125, Asp-127, Lys-129, and Glu-134 each contribute to the Ca(2+) site. The short motif at 138 to 147 is the Nuclear export signal 1 element; the sequence is VLRMMVGVNI. Residues Asp-164, Asp-166, Asp-168, and Glu-175 each coordinate Ca(2+). A Nuclear export signal 2 motif is present at residues 176–185; that stretch reads FVKVLEKVDV.

Belongs to the calcineurin regulatory subunit family. CHP subfamily. As to quaternary structure, monomer. Interacts with STK17B; the interaction occurs in a calcium-independent manner and induces the translocation of CHP1 from the Golgi to the nucleus. Interacts with GAPDH; the interaction is direct, occurs in a N-myristoylation-dependent manner and facilitates the ability of CHP1 to bind microtubules. Interacts with KIF1B (via the C-terminal end of the kinesin-motor domain); the interaction occurs in a calcium-dependent manner. Associates (via C-terminal domain) with microtubules; the association occurs with polymerized microtubules during the cell cycle in a myristoylation- and calcium-independent manner and is enhanced by GAPDH. Interacts with PPP3CA. Interacts with SLC9A1/NHE1 (via the cytoplasmic C-terminal domain); the interaction occurs at the plasma membrane in a calcium-dependent manner and at a domain that is critical for growth factor stimulation of the exchanger. Interacts with SLC9A3; increases SLC9A3 trafficking and activity at the plasma membrane. Post-translationally, phosphorylated; decreased phosphorylation is associated with an increase in SLC9A1/NHE1 Na(+)/H(+) exchange activity. Phosphorylation occurs in serum-dependent manner. The phosphorylation state may regulate the binding to SLC9A1/NHE1. Both N-myristoylation and calcium-mediated conformational changes are essential for its function in exocytic traffic. N-myristoylation is required for its association with microtubules and interaction with GAPDH, but not for the constitutive association to membranes.

The protein resides in the nucleus. It is found in the cytoplasm. Its subcellular location is the cytoskeleton. It localises to the endomembrane system. The protein localises to the endoplasmic reticulum-Golgi intermediate compartment. The protein resides in the endoplasmic reticulum. It is found in the cell membrane. Its subcellular location is the membrane. Functionally, calcium-binding protein involved in different processes such as regulation of vesicular trafficking, plasma membrane Na(+)/H(+) exchanger and gene transcription. Involved in the constitutive exocytic membrane traffic. Mediates the association between microtubules and membrane-bound organelles of the endoplasmic reticulum and Golgi apparatus and is also required for the targeting and fusion of transcytotic vesicles (TCV) with the plasma membrane. Functions as an integral cofactor in cell pH regulation by controlling plasma membrane-type Na(+)/H(+) exchange activity. Affects the pH sensitivity of SLC9A1/NHE1 by increasing its sensitivity at acidic pH. Required for the stabilization and localization of SLC9A1/NHE1 at the plasma membranes. Inhibits serum- and GTPase-stimulated Na(+)/H(+) exchange. Plays a role as an inhibitor of ribosomal RNA transcription by repressing the nucleolar UBF1 transcriptional activity. May sequester UBF1 in the nucleoplasm and limit its translocation to the nucleolus. Associates to the ribosomal gene promoter. Acts as a negative regulator of the calcineurin/NFAT signaling pathway. Inhibits NFAT nuclear translocation and transcriptional activity by suppressing the calcium-dependent calcineurin phosphatase activity. Also negatively regulates the kinase activity of the apoptosis-induced kinase STK17B. Inhibits both STK17B auto- and substrate-phosphorylations in a calcium-dependent manner. This Mus musculus (Mouse) protein is Calcineurin B homologous protein 1 (Chp1).